Here is a 258-residue protein sequence, read N- to C-terminus: MTRYKAQISYDGSAFSGFQRQPNCRTVQEEIERTLKRLNSGNDVIIHGAGRTDVGVHAYGQVIHFDLPQARDVEKLRFGLDTQCPDDIDIVKVEQVSDDFHCRYDKHIKTYEFLVDIGRPKNPMMRNYATHYPYPVIIELMQEAIKDLVGTHDFTGFTASGTSVENKVRTIFDAKIQFEASKNLLIFTFTGNGFLYKQVRNMVGTLLKIGNGRMPISQIKTILQAKNRDLAGPTAAGNGLYLKEIIYEDEECFSNFRK.

Catalysis depends on Asp53, which acts as the Nucleophile. Tyr111 is a substrate binding site.

It belongs to the tRNA pseudouridine synthase TruA family. Homodimer.

The enzyme catalyses uridine(38/39/40) in tRNA = pseudouridine(38/39/40) in tRNA. Formation of pseudouridine at positions 38, 39 and 40 in the anticodon stem and loop of transfer RNAs. This chain is tRNA pseudouridine synthase A, found in Streptococcus agalactiae serotype V (strain ATCC BAA-611 / 2603 V/R).